Here is a 484-residue protein sequence, read N- to C-terminus: Glycogen synthase (484 aa).

Position 18 (lysine 18) interacts with ADP-alpha-D-glucose.

The protein belongs to the glycosyltransferase 1 family. Bacterial/plant glycogen synthase subfamily.

The enzyme catalyses [(1-&gt;4)-alpha-D-glucosyl](n) + ADP-alpha-D-glucose = [(1-&gt;4)-alpha-D-glucosyl](n+1) + ADP + H(+). Its pathway is glycan biosynthesis; glycogen biosynthesis. In terms of biological role, synthesizes alpha-1,4-glucan chains using ADP-glucose. In Vibrio cholerae serotype O1 (strain ATCC 39541 / Classical Ogawa 395 / O395), this protein is Glycogen synthase.